The sequence spans 200 residues: Recombination protein RecR (200 aa).

The segment at 58-73 adopts a C4-type zinc-finger fold; sequence CEVCHNLAEEGLCAIC. Residues 81–176 form the Toprim domain; it reads GLICVVEEPV…DISRLAYGMP (96 aa).

Belongs to the RecR family.

Its function is as follows. May play a role in DNA repair. It seems to be involved in an RecBC-independent recombinational process of DNA repair. It may act with RecF and RecO. The protein is Recombination protein RecR of Magnetococcus marinus (strain ATCC BAA-1437 / JCM 17883 / MC-1).